Here is a 225-residue protein sequence, read N- to C-terminus: Dehydrin DHN4 (225 aa).

Positions 1-78 (MEYQGQQHGR…EDDGMGGRRK (78 aa)) are disordered. The segment covering 21–39 (HGVGTGMGTHGGVGTGAAA) has biased composition (gly residues). 5 tandem repeats follow at residues 105 to 118 (YGQQGTGMAGTGGT), 119 to 136 (YGQQGHTGMTGMGATDGT), 137 to 159 (YGQQGHTGMAGTGAHGTAATGGT), 160 to 178 (YGQQGHTGMTGTGMHGTGG), and 179 to 199 (TYGQQGHTGMTGTGMHGTGGT). A 5 X approximate tandem repeats region spans residues 105–199 (YGQQGTGMAG…GTGMHGTGGT (95 aa)).

This sequence belongs to the plant dehydrin family.

The protein is Dehydrin DHN4 (DHN4) of Hordeum vulgare (Barley).